We begin with the raw amino-acid sequence, 284 residues long: 4-diphosphocytidyl-2-C-methyl-D-erythritol kinase (284 aa).

Residue Lys13 is part of the active site. 96 to 106 (PMGGGLGGGSS) contacts ATP. Asp138 is an active-site residue.

It belongs to the GHMP kinase family. IspE subfamily.

The enzyme catalyses 4-CDP-2-C-methyl-D-erythritol + ATP = 4-CDP-2-C-methyl-D-erythritol 2-phosphate + ADP + H(+). It participates in isoprenoid biosynthesis; isopentenyl diphosphate biosynthesis via DXP pathway; isopentenyl diphosphate from 1-deoxy-D-xylulose 5-phosphate: step 3/6. Functionally, catalyzes the phosphorylation of the position 2 hydroxy group of 4-diphosphocytidyl-2C-methyl-D-erythritol. The polypeptide is 4-diphosphocytidyl-2-C-methyl-D-erythritol kinase (Chromobacterium violaceum (strain ATCC 12472 / DSM 30191 / JCM 1249 / CCUG 213 / NBRC 12614 / NCIMB 9131 / NCTC 9757 / MK)).